The primary structure comprises 234 residues: Cyclo(L-leucyl-L-leucyl) synthase (234 aa).

Ser33 acts as the Nucleophile in catalysis. Residues Asn36, 179 to 183 (YIFAE), Tyr203, and 208 to 209 (SI) each bind substrate.

Belongs to the CDPS family.

The enzyme catalyses 2 L-leucyl-tRNA(Leu) = cyclo(L-leucyl-L-leucyl) + 2 tRNA(Leu) + 2 H(+). Functionally, it uses activated amino acids in the form of aminoacyl-tRNAs (aa-tRNAs) as substrates to catalyze the ATP-independent formation of cyclodipeptides which are intermediates in diketopiperazine (DKP) biosynthetic pathways. Catalyzes the formation of cyclo(L-Leu-L-Leu) (cLL) from L-leucyl-tRNA(Leu). Can incorporate various nonpolar residues, such as L-phenylalanine, L-leucine and L-methionine, into cyclodipeptides. The polypeptide is Cyclo(L-leucyl-L-leucyl) synthase (Photorhabdus laumondii subsp. laumondii (strain DSM 15139 / CIP 105565 / TT01) (Photorhabdus luminescens subsp. laumondii)).